The primary structure comprises 349 residues: Single-stranded TG1-3 DNA-binding protein (349 aa).

In terms of domain architecture, RRM 1 spans 45–127; it reads FRVFVGRLST…REIVVQKARP (83 aa). Disordered stretches follow at residues 121-208 and 298-349; these read VVQK…PNSI and EDKQ…AITA. Phosphoserine is present on Ser-152. Residues 168–179 are compositionally biased toward polar residues; the sequence is ANTATAPSSNEA. Positions 181 to 191 are enriched in basic and acidic residues; that stretch reads GVDKKQNEIKG. The RRM 2 domain maps to 206–296; the sequence is NSIYVSGLSV…LTLVVKSAVF (91 aa). Composition is skewed to basic and acidic residues over residues 298 to 310 and 327 to 340; these read EDKQ…KNEN and TEPK…EEKS.

It localises to the cytoplasm. The protein resides in the nucleus. Its subcellular location is the chromosome. It is found in the telomere. Binds single-stranded telomeric sequences of the type (TG[1-3])n in vitro. Has a role in meiosis. This chain is Single-stranded TG1-3 DNA-binding protein (tcg1), found in Schizosaccharomyces pombe (strain 972 / ATCC 24843) (Fission yeast).